A 477-amino-acid polypeptide reads, in one-letter code: Bifunctional protein HldE (477 aa).

Positions 1–318 (MKVTLPDFRR…ENAIRGRADT (318 aa)) are ribokinase. Residue 195–198 (NLSE) coordinates ATP. Asp264 is a catalytic residue. The tract at residues 344–477 (MTNGVFDILH…INIIRQGQND (134 aa)) is cytidylyltransferase.

It in the N-terminal section; belongs to the carbohydrate kinase PfkB family. This sequence in the C-terminal section; belongs to the cytidylyltransferase family. In terms of assembly, homodimer.

It catalyses the reaction D-glycero-beta-D-manno-heptose 7-phosphate + ATP = D-glycero-beta-D-manno-heptose 1,7-bisphosphate + ADP + H(+). The enzyme catalyses D-glycero-beta-D-manno-heptose 1-phosphate + ATP + H(+) = ADP-D-glycero-beta-D-manno-heptose + diphosphate. Its pathway is nucleotide-sugar biosynthesis; ADP-L-glycero-beta-D-manno-heptose biosynthesis; ADP-L-glycero-beta-D-manno-heptose from D-glycero-beta-D-manno-heptose 7-phosphate: step 1/4. It participates in nucleotide-sugar biosynthesis; ADP-L-glycero-beta-D-manno-heptose biosynthesis; ADP-L-glycero-beta-D-manno-heptose from D-glycero-beta-D-manno-heptose 7-phosphate: step 3/4. In terms of biological role, catalyzes the phosphorylation of D-glycero-D-manno-heptose 7-phosphate at the C-1 position to selectively form D-glycero-beta-D-manno-heptose-1,7-bisphosphate. Catalyzes the ADP transfer from ATP to D-glycero-beta-D-manno-heptose 1-phosphate, yielding ADP-D-glycero-beta-D-manno-heptose. This Edwardsiella ictaluri (strain 93-146) protein is Bifunctional protein HldE.